The chain runs to 202 residues: Probable 1-Cys peroxiredoxin (202 aa).

A Thioredoxin domain is found at 1-148; it reads STHGKIRIHD…VVRAVDSLLT (148 aa). The active-site Cysteine sulfenic acid (-SOH) intermediate is C30. Residues 178–201 carry the Bipartite nuclear localization signal motif; the sequence is KKLFPQGFETKDLPSKKGYLRFTK.

The protein belongs to the peroxiredoxin family. Prx6 subfamily. Embryos.

Its subcellular location is the nucleus. It localises to the cytoplasm. It catalyses the reaction a hydroperoxide + [thioredoxin]-dithiol = an alcohol + [thioredoxin]-disulfide + H2O. Thiol-specific peroxidase that catalyzes the reduction of hydrogen peroxide and organic hydroperoxides to water and alcohols, respectively. Seems to contribute to the inhibition of germination during stress. The protein is Probable 1-Cys peroxiredoxin of Bromus secalinus (Rye brome).